The primary structure comprises 375 residues: MSCPVIELAQQLIKRPSLSPNDEGCQALMIERLTAIGFTVEAMDFGDTQNFWAWRGTGKTLAFAGHTDVVPSGDESHWQHPPFEPIIRDGMLYGRGAADMKGSLAAMVIAAERFVAAHPNHQGRLAFLITSDEEASAVNGTVKVVDALMARNERLDYCLVGEPSSTHVVGDVVKNGRRGSITANLRIHGMQGHVAYPHLADNPVHRAAPALNELIATEWDRGNDFFPPTTMQIANIQAGTGSNNVIPGELFVQFNFRFSTELTDVLIQQRVAELLDRHQLNYTIDWKLSGQPFLTARGELVDAVVNAVKHYNEVTPELLTNGGTSDGRFIARMGAQVVELGPINATIHKVDECVSAADLQLLSRMYQRIMEQLIA.

His66 contributes to the Zn(2+) binding site. Asp68 is an active-site residue. Asp99 serves as a coordination point for Zn(2+). Glu133 (proton acceptor) is an active-site residue. Positions 134, 162, and 348 each coordinate Zn(2+).

The protein belongs to the peptidase M20A family. DapE subfamily. Homodimer. Zn(2+) serves as cofactor. The cofactor is Co(2+).

It carries out the reaction N-succinyl-(2S,6S)-2,6-diaminopimelate + H2O = (2S,6S)-2,6-diaminopimelate + succinate. It functions in the pathway amino-acid biosynthesis; L-lysine biosynthesis via DAP pathway; LL-2,6-diaminopimelate from (S)-tetrahydrodipicolinate (succinylase route): step 3/3. In terms of biological role, catalyzes the hydrolysis of N-succinyl-L,L-diaminopimelic acid (SDAP), forming succinate and LL-2,6-diaminopimelate (DAP), an intermediate involved in the bacterial biosynthesis of lysine and meso-diaminopimelic acid, an essential component of bacterial cell walls. In Pectobacterium atrosepticum (strain SCRI 1043 / ATCC BAA-672) (Erwinia carotovora subsp. atroseptica), this protein is Succinyl-diaminopimelate desuccinylase.